Here is a 180-residue protein sequence, read N- to C-terminus: NADH-quinone oxidoreductase subunit I (180 aa).

2 consecutive 4Fe-4S ferredoxin-type domains span residues Leu50–Ala80 and Glu90–Asp119. Positions 60, 63, 66, 70, 99, 102, 105, and 109 each coordinate [4Fe-4S] cluster.

This sequence belongs to the complex I 23 kDa subunit family. As to quaternary structure, NDH-1 is composed of 14 different subunits. Subunits NuoA, H, J, K, L, M, N constitute the membrane sector of the complex. The cofactor is [4Fe-4S] cluster.

It is found in the cell inner membrane. It catalyses the reaction a quinone + NADH + 5 H(+)(in) = a quinol + NAD(+) + 4 H(+)(out). Functionally, NDH-1 shuttles electrons from NADH, via FMN and iron-sulfur (Fe-S) centers, to quinones in the respiratory chain. The immediate electron acceptor for the enzyme in this species is believed to be ubiquinone. Couples the redox reaction to proton translocation (for every two electrons transferred, four hydrogen ions are translocated across the cytoplasmic membrane), and thus conserves the redox energy in a proton gradient. This chain is NADH-quinone oxidoreductase subunit I, found in Acinetobacter baumannii (strain ACICU).